A 181-amino-acid polypeptide reads, in one-letter code: MAEGHGTTAHTGAEGGHKAPFPPFQQDTFASQLVSLLIAFVALYLIVSKVALPKVGGVLDARQKKIEDDFAAALRLKGESDDALKAYEDALAQARARAQAIGTETRERLNAAAEAERKTLEQRLAVKLADAEKTIAATREQAMSNVRGIATDAASAIVQQLVGIAPDAKAVGHAVDATLKG.

Residues 1–12 are compositionally biased toward low complexity; the sequence is MAEGHGTTAHTG. A disordered region spans residues 1-20; that stretch reads MAEGHGTTAHTGAEGGHKAP. Residues 33-53 form a helical membrane-spanning segment; sequence LVSLLIAFVALYLIVSKVALP.

The protein belongs to the ATPase B chain family. F-type ATPases have 2 components, F(1) - the catalytic core - and F(0) - the membrane proton channel. F(1) has five subunits: alpha(3), beta(3), gamma(1), delta(1), epsilon(1). F(0) has three main subunits: a(1), b(2) and c(10-14). The alpha and beta chains form an alternating ring which encloses part of the gamma chain. F(1) is attached to F(0) by a central stalk formed by the gamma and epsilon chains, while a peripheral stalk is formed by the delta and b chains.

The protein localises to the cell inner membrane. F(1)F(0) ATP synthase produces ATP from ADP in the presence of a proton or sodium gradient. F-type ATPases consist of two structural domains, F(1) containing the extramembraneous catalytic core and F(0) containing the membrane proton channel, linked together by a central stalk and a peripheral stalk. During catalysis, ATP synthesis in the catalytic domain of F(1) is coupled via a rotary mechanism of the central stalk subunits to proton translocation. Functionally, component of the F(0) channel, it forms part of the peripheral stalk, linking F(1) to F(0). The b'-subunit is a diverged and duplicated form of b found in plants and photosynthetic bacteria. This is ATP synthase subunit b 2 (atpF2) from Rhodopseudomonas palustris (strain BisA53).